A 273-amino-acid polypeptide reads, in one-letter code: Bifunctional protein FolD (273 aa).

NADP(+)-binding positions include 155–157, Ser-180, and Thr-221; that span reads GRS.

This sequence belongs to the tetrahydrofolate dehydrogenase/cyclohydrolase family. Homodimer.

It catalyses the reaction (6R)-5,10-methylene-5,6,7,8-tetrahydrofolate + NADP(+) = (6R)-5,10-methenyltetrahydrofolate + NADPH. The catalysed reaction is (6R)-5,10-methenyltetrahydrofolate + H2O = (6R)-10-formyltetrahydrofolate + H(+). It functions in the pathway one-carbon metabolism; tetrahydrofolate interconversion. In terms of biological role, catalyzes the oxidation of 5,10-methylenetetrahydrofolate to 5,10-methenyltetrahydrofolate and then the hydrolysis of 5,10-methenyltetrahydrofolate to 10-formyltetrahydrofolate. In Coprothermobacter proteolyticus (strain ATCC 35245 / DSM 5265 / OCM 4 / BT), this protein is Bifunctional protein FolD.